A 327-amino-acid polypeptide reads, in one-letter code: Peroxidase 15 (327 aa).

An N-terminal signal peptide occupies residues 1–23 (MASFSPLLAMALAIFIFSSHSNA). Gln-24 carries the pyrrolidone carboxylic acid modification. Cystine bridges form between Cys-34–Cys-115, Cys-67–Cys-72, Cys-121–Cys-323, and Cys-200–Cys-232. A glycan (N-linked (GlcNAc...) asparagine) is linked at Asn-36. His-65 acts as the Proton acceptor in catalysis. Ca(2+) contacts are provided by Asp-66, Val-69, Gly-71, Asp-73, and Ser-75. N-linked (GlcNAc...) asparagine glycosylation is found at Asn-81, Asn-96, and Asn-159. Pro-163 contacts substrate. Asn-168 and Asn-171 each carry an N-linked (GlcNAc...) asparagine glycan. His-193 serves as a coordination point for heme b. A Ca(2+)-binding site is contributed by Thr-194. N-linked (GlcNAc...) asparagine glycosylation is found at Asn-209 and Asn-221. Residues Asp-245, Thr-248, and Asp-253 each coordinate Ca(2+). N-linked (GlcNAc...) asparagine glycosylation is found at Asn-287 and Asn-291.

The protein belongs to the peroxidase family. Classical plant (class III) peroxidase subfamily. Ca(2+) serves as cofactor. Requires heme b as cofactor.

Its subcellular location is the secreted. It catalyses the reaction 2 a phenolic donor + H2O2 = 2 a phenolic radical donor + 2 H2O. Its function is as follows. Removal of H(2)O(2), oxidation of toxic reductants, biosynthesis and degradation of lignin, suberization, auxin catabolism, response to environmental stresses such as wounding, pathogen attack and oxidative stress. These functions might be dependent on each isozyme/isoform in each plant tissue. This chain is Peroxidase 15, found in Ipomoea batatas (Sweet potato).